The sequence spans 464 residues: 3-deoxy-D-manno-octulosonic acid transferase (464 aa).

Residues 2–22 (MLLYYALSFILLPIYFIIILI) traverse the membrane as a helical; Signal-anchor segment. Residues 47-93 (YSLDFLHNEANKERFKGDTERRTAAYTSVREDSSTGSTSKLPLEASY) enclose the RPE1 insert domain. The Proton acceptor role is filled by Glu-107. Residues 311 to 312 (PR), 352 to 354 (FGE), and 377 to 380 (NILE) contribute to the CMP site.

The protein belongs to the glycosyltransferase group 1 family.

The protein resides in the cell inner membrane. The enzyme catalyses lipid IVA (E. coli) + CMP-3-deoxy-beta-D-manno-octulosonate = alpha-Kdo-(2-&gt;6)-lipid IVA (E. coli) + CMP + H(+). The protein operates within bacterial outer membrane biogenesis; LPS core biosynthesis. In terms of biological role, involved in lipopolysaccharide (LPS) biosynthesis. Catalyzes the transfer of 3-deoxy-D-manno-octulosonate (Kdo) residue(s) from CMP-Kdo to lipid IV(A), the tetraacyldisaccharide-1,4'-bisphosphate precursor of lipid A. The polypeptide is 3-deoxy-D-manno-octulosonic acid transferase (waaA) (Rickettsia felis (strain ATCC VR-1525 / URRWXCal2) (Rickettsia azadi)).